Reading from the N-terminus, the 204-residue chain is YAFLLLHQHPDILDDLRTEHGQVCGLNRQSILLALQSRPRLLNDLKLTHAVLKETLRLFPMGPVLRKCPRVPSEMIEYEGRTYDIRNHIVAISHNSLHRRPDLFPDPDAFNPYRFLPGAVIPIPADAWRPFEKGNGYCVGQELAMIQMKVMLLLTLTEFDFQPKYARKAARGPDIYGGYAYTTGSGIGPTPAGGLPMRVDKRAK.

A heme-binding site is contributed by Cys-138.

Belongs to the cytochrome P450 family. Heme serves as cofactor.

The protein operates within secondary metabolite biosynthesis. Cytochrome P450 monooxygenase; part of the gene cluster that mediates the biosynthesis of the indole diterpenes penitrems. The geranylgeranyl diphosphate (GGPP) synthase penG catalyzes the first step in penitrem biosynthesis via conversion of farnesyl pyrophosphate and isopentyl pyrophosphate into geranylgeranyl pyrophosphate (GGPP). Condensation of indole-3-glycerol phosphate with GGPP by the prenyl transferase penC then forms 3-geranylgeranylindole (3-GGI). Epoxidation by the FAD-dependent monooxygenase penM leads to a epoxidized-GGI that is substrate of the terpene cyclase penB for cyclization to yield paspaline. Paspaline is subsequently converted to 13-desoxypaxilline by the cytochrome P450 monooxygenase penP, the latter being then converted to paxilline by the cytochrome P450 monooxygenase penQ. Paxilline is converted to beta-paxitriol via C-10 ketoreduction by the short-chain dehydrogenase PC-15 which can be monoprenylated at the C-20 by the indole diterpene prenyltransferase penD. A two-step elimination (acetylation and elimination) process performed by the O-acetyltransferase PC-16 and the P.simplicissimum ptmI-ortholog not yet identified in P.crustosum, leads to the production of the prenylated form of penijanthine. The FAD-linked oxidoreductase ptmO then converts the prenylated form of penijanthine into PC-M5 which is in turn transformed into PC-M4 by the aromatic dimethylallyltransferase PC-22. A series of oxidation steps involving 4 cytochrome P450 monooxygenases (PC-21, PC-05, PC-23, PC-20) and a FAD-dependent monooxygenase (PC-14) are required for the transformation of PC-M4 to penitrems A and E. Synthesis of these final products is proposed to proceed via penitrems D and C (PC-21, PC-05, PC-14) and penitrems B and F (PC-21, PC-05, PC-14, PC-23). This Penicillium crustosum (Blue mold fungus) protein is Cytochrome P450 monooxygenase PC-23.